The chain runs to 251 residues: PF03932 family protein CutC (251 aa).

The protein belongs to the CutC family.

The protein resides in the cytoplasm. The protein is PF03932 family protein CutC of Erwinia tasmaniensis (strain DSM 17950 / CFBP 7177 / CIP 109463 / NCPPB 4357 / Et1/99).